We begin with the raw amino-acid sequence, 419 residues long: NF-kappa-B essential modulator (419 aa).

Positions 1-197 are required for interaction with and ubiquitination by MARCHF2; that stretch reads MNRHLWKSQL…REALQQQHSV (197 aa). A phosphoserine; by IKKB mark is found at Ser-31 and Ser-43. Residues 44 to 111 form an interaction with CHUK/IKBKB region; the sequence is EQGAPETLQR…KLVERLGLEK (68 aa). The stretch at 49–356 forms a coiled coil; sequence ETLQRCLEEN…CQESARIEDM (308 aa). Residue Ser-68 is modified to Phosphoserine. Ser-85 is modified (phosphoserine; by ATM). Residues Lys-111, Lys-139, Lys-143, Lys-226, Lys-246, and Lys-264 each participate in a glycyl lysine isopeptide (Lys-Gly) (interchain with G-Cter in ubiquitin) cross-link. The interval 150–257 is interaction with TANK; sequence LGELQESQSR…SVVGSERKRG (108 aa). Residues 242 to 350 are ubiquitin-binding (UBAN); it reads DNHIKSSVVG…SKLKASCQES (109 aa). The interval 246–365 is self-association; sequence KSSVVGSERK…MRKRHVEVSQ (120 aa). A required for interaction with TNFAIP3 region spans residues 251-419; sequence GSERKRGMQL…LQIHVMECIE (169 aa). Lys-277 participates in a covalent cross-link: Glycyl lysine isopeptide (Lys-Gly) (interchain with G-Cter in SUMO); alternate. Lys-277 is covalently cross-linked (Glycyl lysine isopeptide (Lys-Gly) (interchain with G-Cter in ubiquitin); alternate). Glycyl lysine isopeptide (Lys-Gly) (interchain with G-Cter in ubiquitin) cross-links involve residues Lys-283, Lys-285, Lys-292, and Lys-302. Lys-309 participates in a covalent cross-link: Glycyl lysine isopeptide (Lys-Gly) (interchain with G-Cter in SUMO); alternate. A Glycyl lysine isopeptide (Lys-Gly) (interchain with G-Cter in ubiquitin); alternate cross-link involves residue Lys-309. Glycyl lysine isopeptide (Lys-Gly) (interchain with G-Cter in ubiquitin) cross-links involve residues Lys-321 and Lys-325. The interval 322-343 is leucine-zipper; sequence LAEKKELLQEQLEQLQREYSKL. A Glycyl lysine isopeptide (Lys-Gly) (interchain with G-Cter in ubiquitin and interchain with MARCHF2) cross-link involves residue Lys-326. A disordered region spans residues 358-395; sequence KRHVEVSQAPLPPAPAYLSSPLALPSQRRSPPEEPPDF. The segment covering 373 to 386 has biased composition (low complexity); the sequence is AYLSSPLALPSQRR. A Phosphoserine; by IKKB modification is found at Ser-376. Positions 382 to 419 are interaction with CYLD; that stretch reads PSQRRSPPEEPPDFCCPKCQYQAPDMDTLQIHVMECIE. The residue at position 387 (Ser-387) is a Phosphoserine. Residues 389-419 form a CCHC NOA-type zinc finger; the sequence is PEEPPDFCCPKCQYQAPDMDTLQIHVMECIE. Zn(2+) is bound at residue Cys-397. Residue Lys-399 forms a Glycyl lysine isopeptide (Lys-Gly) (interchain with G-Cter in ubiquitin) linkage. Positions 400, 413, and 417 each coordinate Zn(2+).

As to quaternary structure, homodimer; disulfide-linked. Component of the I-kappa-B-kinase (IKK) core complex consisting of CHUK, IKBKB and IKBKG; probably four alpha/CHUK-beta/IKBKB dimers are associated with four gamma/IKBKG subunits. The IKK core complex seems to associate with regulatory or adapter proteins to form a IKK-signalosome holo-complex. The IKK complex associates with TERF2IP/RAP1, leading to promote IKK-mediated phosphorylation of RELA/p65. Part of a complex composed of NCOA2, NCOA3, CHUK/IKKA, IKBKB, IKBKG and CREBBP. Interacts with COPS3, CYLD, NALP2, TRPC4AP and PIDD1. Interacts with ATM; the complex is exported from the nucleus. Interacts with TRAF6. Interacts with IKBKE. Interacts with TANK; the interaction is enhanced by IKBKE and TBK1. Part of a ternary complex consisting of TANK, IKBKB and IKBKG. Interacts with ZFAND5. Interacts with RIPK2. Interacts with TNIP1 and TNFAIP3; TNIP1 facilitates the TNFAIP3-mediated de-ubiquitination of IKBKG. Interacts with TNFAIP3; the interaction is induced by TNF stimulation and by polyubiquitin. Binds (via UBAN region) polyubiquitin; binds both 'Lys-63'-linked and linear polyubiquitin, with higher affinity for linear ubiquitin. Interacts with NLRP10. Interacts with TANK; this interaction increases in response to DNA damage. Interacts with USP10; this interaction increases in response to DNA damage. Interacts with ZC3H12A; this interaction increases in response to DNA damage. Interacts with IFIT5; the interaction synergizes the recruitment of IKK to MAP3K7 and enhances IKK phosphorylation. Interacts with TRIM29; this interaction induces IKBKG/NEMO ubiquitination and proteolytic degradation. Interacts with TRIM13; this interaction leads to IKBKG/NEMO ubiquitination. Interacts with ARFIP2. Interacts with RIPK1. Interacts with (ubiquitinated) BCL10; interaction with polyubiquitinated BCL10 via both 'Lys-63'-linked and linear ubiquitin is required for TCR-induced NF-kappa-B activation. Interacts with MARCHF2; during the late stages of macrophage viral and bacterial infection; the interaction leads to ubiquitination and degradation of IKBKG/NEMO. In terms of assembly, (Microbial infection) Interacts with Molluscum contagiosum virus protein MC005; this interaction inhibits NF-kappa-B activation. (Microbial infection) Interacts with HTLV-1 Tax oncoprotein; the interaction activates IKBKG. As to quaternary structure, (Microbial infection) Interacts with Shigella flexneri ipah9.8; the interaction promotes TNIP1-dependent 'Lys-27'-linked polyubiquitination of IKBKG which perturbs NF-kappa-B activation during bacterial infection. In terms of assembly, (Microbial infection) Interacts with SARS coronavirus-2/SARS-CoV-2 virus protein ORF9B (via N-terminus); the interaction inhibits polyubiquitination through 'Lys-63' and NF-kappa-B activation. Post-translationally, phosphorylation at Ser-68 attenuates aminoterminal homodimerization. Polyubiquitinated on Lys-285 via 'Lys-63'-linked ubiquitin; the ubiquitination is mediated downstream of NOD2 and RIPK2 and probably plays a role in signaling by facilitating interactions with ubiquitin domain-containing proteins and activates the NF-kappa-B pathway. Polyubiquitinated on Lys-285 and Lys-399 through 'Lys-63'-linked ubiquitin; the ubiquitination is mediated by BCL10, MALT1 and TRAF6 and probably plays a role in signaling by facilitating interactions with ubiquitin domain-containing proteins and activates the NF-kappa-B pathway. Monoubiquitinated on Lys-277 and Lys-309; promotes nuclear export. Polyubiquitinated through 'Lys-27' by TRIM23; involved in antiviral innate and inflammatory responses. Linear polyubiquitinated on Lys-111, Lys-143, Lys-226, Lys-246, Lys-264, Lys-277, Lys-285, Lys-292, Lys-302, Lys-309 and Lys-326; the head-to-tail polyubiquitination is mediated by the LUBAC complex and plays a key role in NF-kappa-B activation. Deubiquitinated by USP10 in a TANK-dependent and -independent manner, leading to the negative regulation of NF-kappa-B signaling upon DNA damage. Ubiquitinated at Lys-326 by MARCHF2 following bacterial and viral infection which leads to its degradation. Polyubiquitinated via 'Lys-29'-linked ubiquitin; leading to lysosomal degradation. In terms of processing, sumoylated on Lys-277 and Lys-309 with SUMO1; the modification results in phosphorylation of Ser-85 by ATM leading to a replacement of the sumoylation by mono-ubiquitination on these residues. Post-translationally, neddylated by TRIM40, resulting in stabilization of NFKBIA and down-regulation of NF-kappa-B activity. (Microbial infection) Cleaved by hepatitis A virus (HAV) protease 3C allowing the virus to disrupt the host innate immune signaling. In terms of processing, (Microbial infection) Deubiquitinated by Epstein-Barr virus BPLF1 on both 'Lys-48' and 'Lys-63'-linked ubiquitin chains; leading to NF-kappa-B signaling inhibition. Post-translationally, (Microbial infection) Polyubiquitinated on Lys-309 and Lys-321 via 'Lys-27'-linked ubiquitin by Shigella flexneri E3 ubiquitin-protein ligase ipah9.8, leading to its degradation by the proteasome. (Microbial infection) Polyubiquitination through 'Lys-63' is interrupted by interaction with SARS coronavirus-2/SARS-CoV-2 virus protein ORF9B which inhibits the NF-kappa-B pathway. In terms of tissue distribution, heart, brain, placenta, lung, liver, skeletal muscle, kidney and pancreas.

Its subcellular location is the cytoplasm. It localises to the nucleus. Its function is as follows. Regulatory subunit of the IKK core complex which phosphorylates inhibitors of NF-kappa-B thus leading to the dissociation of the inhibitor/NF-kappa-B complex and ultimately the degradation of the inhibitor. Its binding to scaffolding polyubiquitin plays a key role in IKK activation by multiple signaling receptor pathways. Can recognize and bind both 'Lys-63'-linked and linear polyubiquitin upon cell stimulation, with a much higher affinity for linear polyubiquitin. Could be implicated in NF-kappa-B-mediated protection from cytokine toxicity. Essential for viral activation of IRF3. Involved in TLR3- and IFIH1-mediated antiviral innate response; this function requires 'Lys-27'-linked polyubiquitination. (Microbial infection) Also considered to be a mediator for HTLV-1 Tax oncoprotein activation of NF-kappa-B. This is NF-kappa-B essential modulator from Homo sapiens (Human).